Reading from the N-terminus, the 131-residue chain is Con-Ins Q1b (131 aa).

The signal sequence occupies residues 1–24 (MTTSSYFLLVALGLLLYLCQSSFG). 4 disulfide bridges follow: Cys29-Cys107, Cys41-Cys110, Cys53-Cys123, and Cys109-Cys114. Residues 59–92 (LQGGTDDARKKRGRASLLRKRRGFLSMLKARAKR) constitute a propeptide, c peptide. A 4-carboxyglutamate; partial modification is found at Glu118. At Ser130 the chain carries Serine amide.

The protein belongs to the insulin family. As to quaternary structure, heterodimer of A and B chains; disulfide-linked. In terms of tissue distribution, expressed by the venom gland.

It is found in the secreted. In terms of biological role, this venom insulin facilitates prey capture by rapidly inducing hypoglycemic shock. Intraperitoneal injection of this peptide into zebrafish lowers blood glucose with the same potency than human insulin. In vivo, when applied to water, this peptide reduces overall locomotor activity of zebrafish larvae, observed as a significant decrease in the percentage of time spent swimming and movement frequency. The polypeptide is Con-Ins Q1b (Conus quercinus (Oak cone)).